A 122-amino-acid polypeptide reads, in one-letter code: Large ribosomal subunit protein bL12 (122 aa).

Belongs to the bacterial ribosomal protein bL12 family. Homodimer. Part of the ribosomal stalk of the 50S ribosomal subunit. Forms a multimeric L10(L12)X complex, where L10 forms an elongated spine to which 2 to 4 L12 dimers bind in a sequential fashion. Binds GTP-bound translation factors.

Its function is as follows. Forms part of the ribosomal stalk which helps the ribosome interact with GTP-bound translation factors. Is thus essential for accurate translation. This Acinetobacter baumannii (strain AB0057) protein is Large ribosomal subunit protein bL12.